We begin with the raw amino-acid sequence, 331 residues long: Probable cytosolic iron-sulfur protein assembly protein Ciao1 (331 aa).

WD repeat units lie at residues glycine 12 to lysine 51, glycine 57 to glutamate 96, glycine 97 to cysteine 136, alanine 142 to aspartate 181, serine 188 to glycine 227, glutamine 246 to glutamate 285, and alanine 297 to glutamate 331.

This sequence belongs to the WD repeat CIA1 family.

Its function is as follows. Essential component of the cytosolic iron-sulfur (Fe/S) protein assembly machinery. Required for the maturation of extramitochondrial Fe/S proteins. In Drosophila grimshawi (Hawaiian fruit fly), this protein is Probable cytosolic iron-sulfur protein assembly protein Ciao1.